Here is a 117-residue protein sequence, read N- to C-terminus: Small ribosomal subunit protein bS6 (117 aa).

Residues 96–117 (HAEGPSVQMQKRDERDSRRERR) form a disordered region. Residues 105–117 (QKRDERDSRRERR) show a composition bias toward basic and acidic residues.

This sequence belongs to the bacterial ribosomal protein bS6 family.

Binds together with bS18 to 16S ribosomal RNA. The chain is Small ribosomal subunit protein bS6 from Ruegeria pomeroyi (strain ATCC 700808 / DSM 15171 / DSS-3) (Silicibacter pomeroyi).